A 312-amino-acid chain; its full sequence is Beta-ketoacyl-[acyl-carrier-protein] synthase III (312 aa).

Catalysis depends on residues cysteine 112 and histidine 237. The ACP-binding stretch occupies residues 238 to 242; the sequence is QANIR. Asparagine 267 is a catalytic residue.

It belongs to the thiolase-like superfamily. FabH family. In terms of assembly, homodimer.

The protein resides in the cytoplasm. The catalysed reaction is malonyl-[ACP] + acetyl-CoA + H(+) = 3-oxobutanoyl-[ACP] + CO2 + CoA. It participates in lipid metabolism; fatty acid biosynthesis. Functionally, catalyzes the condensation reaction of fatty acid synthesis by the addition to an acyl acceptor of two carbons from malonyl-ACP. Catalyzes the first condensation reaction which initiates fatty acid synthesis and may therefore play a role in governing the total rate of fatty acid production. Possesses both acetoacetyl-ACP synthase and acetyl transacylase activities. Its substrate specificity determines the biosynthesis of branched-chain and/or straight-chain of fatty acids. The protein is Beta-ketoacyl-[acyl-carrier-protein] synthase III of Listeria welshimeri serovar 6b (strain ATCC 35897 / DSM 20650 / CCUG 15529 / CIP 8149 / NCTC 11857 / SLCC 5334 / V8).